The sequence spans 199 residues: Thymidine kinase (199 aa).

Residues 15–22 (GSMFSGKS) and 88–91 (DEVQ) contribute to the ATP site. Catalysis depends on E89, which acts as the Proton acceptor. Residues C145, C148, C183, and H186 each coordinate Zn(2+).

The protein belongs to the thymidine kinase family. In terms of assembly, homotetramer.

Its subcellular location is the cytoplasm. The catalysed reaction is thymidine + ATP = dTMP + ADP + H(+). In Staphylococcus aureus (strain USA300), this protein is Thymidine kinase.